The chain runs to 381 residues: PqqA peptide cyclase (381 aa).

In terms of domain architecture, Radical SAM core spans 12 to 228 (VGPPLWLLAE…AEYRQRLAAE (217 aa)). [4Fe-4S] cluster-binding residues include C26, C30, and C33.

It belongs to the radical SAM superfamily. PqqE family. As to quaternary structure, interacts with PqqD. The interaction is necessary for activity of PqqE. [4Fe-4S] cluster is required as a cofactor.

The catalysed reaction is [PQQ precursor protein] + S-adenosyl-L-methionine = E-Y cross-linked-[PQQ precursor protein] + 5'-deoxyadenosine + L-methionine + H(+). It participates in cofactor biosynthesis; pyrroloquinoline quinone biosynthesis. In terms of biological role, catalyzes the cross-linking of a glutamate residue and a tyrosine residue in the PqqA protein as part of the biosynthesis of pyrroloquinoline quinone (PQQ). The chain is PqqA peptide cyclase from Pseudomonas aeruginosa (strain LESB58).